A 350-amino-acid polypeptide reads, in one-letter code: Small ribosomal subunit biogenesis GTPase RsgA (350 aa).

Residues methionine 1–lysine 30 are disordered. Residues threonine 7–lysine 20 are compositionally biased toward polar residues. Over residues threonine 21–lysine 30 the composition is skewed to basic residues. The CP-type G domain maps to histidine 106 to phenylalanine 274. GTP-binding positions include asparagine 162 to aspartate 165 and glycine 216 to serine 224. Residues cysteine 298, cysteine 303, histidine 305, and cysteine 311 each coordinate Zn(2+).

It belongs to the TRAFAC class YlqF/YawG GTPase family. RsgA subfamily. In terms of assembly, monomer. Associates with 30S ribosomal subunit, binds 16S rRNA. It depends on Zn(2+) as a cofactor.

Its subcellular location is the cytoplasm. One of several proteins that assist in the late maturation steps of the functional core of the 30S ribosomal subunit. Helps release RbfA from mature subunits. May play a role in the assembly of ribosomal proteins into the subunit. Circularly permuted GTPase that catalyzes slow GTP hydrolysis, GTPase activity is stimulated by the 30S ribosomal subunit. In Histophilus somni (strain 129Pt) (Haemophilus somnus), this protein is Small ribosomal subunit biogenesis GTPase RsgA.